The primary structure comprises 593 residues: ATPase family AAA domain-containing protein 3-A (593 aa).

The interval 1–64 (MSWLFGLNKG…AKAARELDQS (64 aa)) is disordered. At 1–242 (MSWLFGLNKG…FRTFISDWDK (242 aa)) the chain is on the mitochondrial intermembrane side. Residues 15–27 (PGVPGFPEPPSPP) are compositionally biased toward pro residues. Composition is skewed to basic and acidic residues over residues 33–44 (GGDKNKPKDKWS) and 53–64 (RAAKAARELDQS). Residues 52–215 (ERAAKAAREL…QIRLKAAEHR (164 aa)) adopt a coiled-coil conformation. A helical membrane pass occupies residues 243–260 (VTATVAGLTLLAVGVYTA). Over 261–593 (KNATGVAGRY…LQPLLEGTQV (333 aa)) the chain is Mitochondrial matrix. 348–355 (GPPGTGKT) is an ATP binding site.

It belongs to the AAA ATPase family. In terms of assembly, can form homooligomers. Homodimer formation at the N-terminus may be regulated by ATP and is required for the interaction with the inner surface of the mitochondrial outer membrane and correct mitochondrial homeostasis.

The protein resides in the mitochondrion inner membrane. It localises to the mitochondrion matrix. It is found in the mitochondrion nucleoid. It catalyses the reaction ATP + H2O = ADP + phosphate + H(+). Its function is as follows. Essential for mitochondrial network organization, mitochondrial metabolism and cell growth at organism and cellular level. May play an important role in mitochondrial protein synthesis. May also participate in mitochondrial DNA replication. May bind to mitochondrial DNA D-loops and contribute to nucleoid stability. Required for enhanced channeling of cholesterol for hormone-dependent steroidogenesis. Involved in mitochondrial-mediated antiviral innate immunity. Required to protect mitochondria from the PERK-mediated unfolded protein response: specifically inhibits the activity of EIF2AK3/PERK at mitochondria-endoplasmic reticulum contact sites, thereby providing a safe haven for mitochondrial protein translation during endoplasmic reticulum stress. Ability to inhibit EIF2AK3/PERK is independent of its ATPase activity. Also involved in the mitochondrial DNA damage response by promoting signaling between damaged genomes and the mitochondrial membrane, leading to activation of the integrated stress response (ISR). The chain is ATPase family AAA domain-containing protein 3-A (atad3-a) from Xenopus laevis (African clawed frog).